The following is a 293-amino-acid chain: Dehydrodolichyl diphosphate synthase complex subunit NUS1 (293 aa).

3 helical membrane passes run 1–23, 35–56, and 117–135; these read MTGLYELVWRVLHALLCLHRTLT, WIWRRCCRAASAAVLAPLGFTL, and IASLVVWCMAVGISYISVY. N-linked (GlcNAc...) asparagine glycosylation is found at Asn-144 and Asn-271. The RXG motif; crucial for prenyltransferase activity signature appears at 290-292; it reads RLG. The isopentenyl diphosphate site is built by Leu-291 and Gly-292.

This sequence belongs to the UPP synthase family. In terms of assembly, the active dehydrodolichyl diphosphate synthase complex is a heterotetramer composed of a dimer of heterodimer of DHDDS and NUS1. Interacts with NPC2. Mg(2+) is required as a cofactor.

Its subcellular location is the endoplasmic reticulum membrane. The enzyme catalyses n isopentenyl diphosphate + (2E,6E)-farnesyl diphosphate = a di-trans,poly-cis-polyprenyl diphosphate + n diphosphate. Its pathway is protein modification; protein glycosylation. The protein operates within lipid metabolism. With respect to regulation, activated by phospholipids including cardiolipin, phosphatidylcholine, phosphatidylethanolamine, phosphatidylinositol and phosphatidylserine. Functionally, with DHDDS, forms the dehydrodolichyl diphosphate synthase (DDS) complex, an essential component of the dolichol monophosphate (Dol-P) biosynthetic machinery. Both subunits contribute to enzymatic activity, i.e. condensation of multiple copies of isopentenyl pyrophosphate (IPP) to farnesyl pyrophosphate (FPP) to produce dehydrodolichyl diphosphate (Dedol-PP), a precursor of dolichol phosphate which is utilized as a sugar carrier in protein glycosylation in the endoplasmic reticulum (ER). Synthesizes long-chain polyprenols, mostly of C95 and C100 chain length. Regulates the glycosylation and stability of nascent NPC2, thereby promoting trafficking of LDL-derived cholesterol. Acts as a specific receptor for the N-terminus of Nogo-B, a neural and cardiovascular regulator. The chain is Dehydrodolichyl diphosphate synthase complex subunit NUS1 from Homo sapiens (Human).